The following is a 116-amino-acid chain: Ribosome-binding factor A (116 aa).

This sequence belongs to the RbfA family. In terms of assembly, monomer. Binds 30S ribosomal subunits, but not 50S ribosomal subunits or 70S ribosomes.

The protein localises to the cytoplasm. Functionally, one of several proteins that assist in the late maturation steps of the functional core of the 30S ribosomal subunit. Associates with free 30S ribosomal subunits (but not with 30S subunits that are part of 70S ribosomes or polysomes). Required for efficient processing of 16S rRNA. May interact with the 5'-terminal helix region of 16S rRNA. The protein is Ribosome-binding factor A of Ureaplasma urealyticum serovar 10 (strain ATCC 33699 / Western).